A 597-amino-acid polypeptide reads, in one-letter code: Replication protein E1 (597 aa).

Residues 75-77 (KRK) carry the Nuclear localization signal motif. Phosphoserine; by host occurs at positions 81, 91, and 104. The Nuclear export signal motif lies at 90-99 (LSPQLASISL). The disordered stretch occupies residues 119 to 141 (QSSNEADDSLEGQRQVEPLPGRE). The tract at residues 137–300 (LPGREENGAD…TLITHHLAAE (164 aa)) is DNA-binding region. Positions 400–550 (IEFILFLADF…FPLDDNGNPG (151 aa)) constitute an SF3 helicase domain. 426–433 (GPPNTGKS) contributes to the ATP binding site. K507 is covalently cross-linked (Glycyl lysine isopeptide (Lys-Gly) (interchain with G-Cter in SUMO)). Residues 574–597 (PEDGEDGETQRGLRLTARGTTESV) form a disordered region.

This sequence belongs to the papillomaviridae E1 protein family. Can form hexamers. Interacts with E2 protein; this interaction increases E1 DNA binding specificity. Interacts with host DNA polymerase subunit POLA2. Interacts with host single stranded DNA-binding protein RPA1. Interacts with host TOP1; this interaction stimulates the enzymatic activity of TOP1. In terms of processing, phosphorylated. Post-translationally, sumoylated.

It localises to the host nucleus. The catalysed reaction is Couples ATP hydrolysis with the unwinding of duplex DNA by translocating in the 3'-5' direction.. It carries out the reaction ATP + H2O = ADP + phosphate + H(+). ATP-dependent DNA 3'-5' helicase required for initiation of viral DNA replication. It forms a complex with the viral E2 protein. The E1-E2 complex binds to the replication origin which contains binding sites for both proteins. During the initial step, a dimer of E1 interacts with a dimer of protein E2 leading to a complex that binds the viral origin of replication with high specificity. Then, a second dimer of E1 displaces the E2 dimer in an ATP-dependent manner to form the E1 tetramer. Following this, two E1 monomers are added to each half of the site, which results in the formation of two E1 trimers on the viral ori. Subsequently, two hexamers will be created. The double hexamer acts as a bi-directional helicase machinery and unwinds the viral DNA and then recruits the host DNA polymerase to start replication. This Canis lupus familiaris (Dog) protein is Replication protein E1.